The sequence spans 141 residues: Hemoglobin subunit alpha-1 (141 aa).

Residues 1–141 (VLSPADKNNV…VSTVLTSKYR (141 aa)) enclose the Globin domain. An O2-binding site is contributed by H58. Residue H87 participates in heme b binding.

Belongs to the globin family. Heterotetramer of two alpha chains and two beta chains. Red blood cells.

In terms of biological role, involved in oxygen transport from the lung to the various peripheral tissues. This Varecia variegata (Black-and-white ruffed lemur) protein is Hemoglobin subunit alpha-1.